The sequence spans 500 residues: NAD(P)H-quinone oxidoreductase chain 4, chloroplastic (500 aa).

14 consecutive transmembrane segments (helical) span residues 4-24, 31-51, 84-104, 111-131, 134-154, 167-187, 212-232, 242-262, 272-292, 308-328, 330-350, 386-406, 411-431, and 462-482; these read FPWL…IFFL, VIFW…TYAF, GLSI…TLAA, ARLF…LFSC, LLLF…LLSM, FILY…GIGL, IFYI…PLHT, HYST…YGLV, AHSL…IYAA, SSVS…DIGL, GALL…FLAG, LALP…GLIT, LLMA…LTPI, and LFLS…PDFV.

Belongs to the complex I subunit 4 family.

It is found in the plastid. The protein resides in the chloroplast thylakoid membrane. It catalyses the reaction a plastoquinone + NADH + (n+1) H(+)(in) = a plastoquinol + NAD(+) + n H(+)(out). The enzyme catalyses a plastoquinone + NADPH + (n+1) H(+)(in) = a plastoquinol + NADP(+) + n H(+)(out). The chain is NAD(P)H-quinone oxidoreductase chain 4, chloroplastic from Jasminum nudiflorum (Winter jasmine).